Here is a 37-residue protein sequence, read N- to C-terminus: Myo-inositol-binding protein (37 aa).

The protein belongs to the bacterial solute-binding protein 2 family.

It localises to the periplasm. The chain is Myo-inositol-binding protein from Pseudomonas sp.